The chain runs to 267 residues: Hydrolase FUB4 (267 aa).

Residues serine 93, aspartate 183, and histidine 243 each act as charge relay system in the active site.

The protein belongs to the AB hydrolase 3 family.

It participates in mycotoxin biosynthesis. Hydrolase; part of the gene cluster that mediates the biosynthesis of fusaric acid, a mycotoxin with low to moderate toxicity to animals and humans, but with high phytotoxic properties. L-aspartate is suggested as fusaric acid amino acid precursor that is activated and further processed to O-acetyl-L-homoserine by cluster enzymes aspartate kinase FUB3 and homoserine O-acetyltransferase FUB5, as well as enzymes of the primary metabolism. The polyketide synthase (PKS) FUB1 generates the triketide trans-2-hexenal which is presumptively released by the hydrolase FUB4 and linked to the NRPS-bound amino acid precursor by NAD(P)-dependent dehydrogenase FUB6. FUB1, FUB4, and the non-canonical NRPS Fub8 may form an enzyme complex. Further processing of the NRPS-bound intermediate might be carried out by FUB6 and the sulfhydrylase FUB7, enabling a spontaneous electrocyclization to close the carbon backbone of fusaric acid. Dihydrofusaric acid is likely to be released via reduction by the thioester reductase (TR) domain of FUB8 whereupon the final oxidation to fusaric acid may (also) be performed by the FMN-dependent dehydrogenase FUB9. The polypeptide is Hydrolase FUB4 (Gibberella moniliformis (strain M3125 / FGSC 7600) (Maize ear and stalk rot fungus)).